A 693-amino-acid chain; its full sequence is Protein-glutamine gamma-glutamyltransferase E (693 aa).

Tyr111 is modified (phosphotyrosine). Residue Thr112 is modified to Phosphothreonine. Residues Ala222, Asn225, Asn227, Asp228, and Asn230 each contribute to the Ca(2+) site. Cys273 is a catalytic residue. Positions 302, 304, 306, 308, and 325 each coordinate Ca(2+). Residues His331 and Asp354 contribute to the active site. Residues Asn394, Thr416, Glu444, and Glu449 each contribute to the Ca(2+) site. The tract at residues 457-483 (LDKLKPNASFGATSSRNPEGEDKEPSI) is disordered.

This sequence belongs to the transglutaminase superfamily. Transglutaminase family. Consists of two polypeptide chains, which are synthesized as a precursor form of a single polypeptide. It depends on Ca(2+) as a cofactor. In terms of processing, activated by proteolytic processing. In vitro activation is commonly achieved by cleavage with dispase, a neutral bacterial protease. Physiological activation may be catalyzed by CTSL and, to a lesser extent, by CTSS. Expressed in skin and stomach and, at lower levels, in testis, kidney and spleen (at protein level). On the basis of its catalytic activity, detected in the epidermis, around the granular and spinous layers but not in the outermost cornified layers. In hair follicles, mainly located in the medulla and the hair cortex.

The protein localises to the cytoplasm. The enzyme catalyses L-glutaminyl-[protein] + L-lysyl-[protein] = [protein]-L-lysyl-N(6)-5-L-glutamyl-[protein] + NH4(+). Its function is as follows. Catalyzes the calcium-dependent formation of isopeptide cross-links between glutamine and lysine residues in various proteins, as well as the conjugation of polyamines to proteins. Involved in the formation of the cornified envelope (CE), a specialized component consisting of covalent cross-links of proteins beneath the plasma membrane of terminally differentiated keratinocytes. Catalyzes small proline-rich proteins (SPRR1 and SPRR2) and LOR cross-linking to form small interchain oligomers, which are further cross-linked by TGM1 onto the growing CE scaffold. In hair follicles, involved in cross-linking structural proteins to hardening the inner root sheath. The polypeptide is Protein-glutamine gamma-glutamyltransferase E (Tgm3) (Mus musculus (Mouse)).